The sequence spans 742 residues: Alginate lyase (742 aa).

The first 26 residues, 1-26 (MRLQPLFVSLALAAPCALLPTASLSA), serve as a signal peptide directing secretion. Substrate-binding positions include arginine 143, 153 to 156 (QVLN), glutamine 204, histidine 208, and 263 to 266 (YYQR). The Proton donor role is filled by tyrosine 264. Catalysis depends on histidine 418, which acts as the Proton acceptor. The Zn(2+) site is built by histidine 420 and aspartate 438. Arginine 443 contributes to the substrate binding site. A Zn(2+)-binding site is contributed by histidine 469. Glutamate 669 is a binding site for substrate.

It belongs to the polysaccharide lyase 17 family. As to quaternary structure, homodimer. Zn(2+) is required as a cofactor.

Its subcellular location is the periplasm. It catalyses the reaction Cleavage of 4-deoxy-alpha-L-erythro-hex-4-enopyranuronoside oligosaccharides into 4-deoxy-alpha-L-erythro-hex-4-enopyranuronate monosaccharides.. In terms of biological role, polysaccharide lyase that catalyzes the depolymerization of alginate via a beta-elimination mechanism, cleaving the beta-1,4 glycosidic bond between two adjacent sugar residues. Acts specifically on alginate and each of its block structures, with highest activity toward poly-beta-D-mannuronate (poly-ManA). Shows an exolytic mode of action, producing unsaturated monomers. Displays a very low activity against poly-beta-D-glucuronate (poly-GlcA), and is not active on poly-alpha-D-galacturonate, hyaluronan, heparin, heparan sulfate and chondroitin sulfate. In Stenotrophomonas maltophilia (strain K279a), this protein is Alginate lyase.